The primary structure comprises 1268 residues: Vigilin (1268 aa).

S2 bears the N-acetylserine mark. At T8 the chain carries Phosphothreonine. Residues S11, S31, and S35 each carry the phosphoserine modification. 14 KH domains span residues 158–229 (PKEH…RLEV), 230–302 (EKAF…AVEV), 303–371 (KKSQ…SVAA), 372–442 (PSWL…EINI), 443–514 (DHKF…DLII), 515–588 (EQRF…SVPI), 589–660 (FKQF…EVSI), 661–734 (PAKL…DIRA), 735–807 (KPEY…SMLV), 808–880 (DPKH…ECAI), 881–979 (PQKF…EVEV), 980–1059 (PFDL…SVTV), 1060–1134 (DPKY…DVPL), and 1135–1209 (DHRV…ALQV). Residues T295 and T296 each carry the phosphothreonine modification. Position 317 is a phosphoserine (S317). Phosphotyrosine is present on Y437. Phosphoserine is present on S645. A disordered region spans residues 910–947 (PDREENPVHSTEPAVQENGDEAGEGREAKDSDPGSPRR). Positions 932–947 (GEGREAKDSDPGSPRR) are enriched in basic and acidic residues. K991 bears the N6-acetyllysine mark. A compositionally biased stretch (polar residues) spans 1237–1249 (SSEKAPDMSSSEE). Residues 1237-1268 (SSEKAPDMSSSEEFPSFGAQVAPKTLPWGPKR) form a disordered region. S1247 and S1252 each carry phosphoserine.

The protein localises to the cytoplasm. It localises to the nucleus. Appears to play a role in cell sterol metabolism. It may function to protect cells from over-accumulation of cholesterol. This is Vigilin (HDLBP) from Pongo abelii (Sumatran orangutan).